Consider the following 248-residue polypeptide: Triosephosphate isomerase (248 aa).

2 residues coordinate substrate: asparagine 12 and lysine 14. Lysine 14 is modified (N6-acetyllysine). Tyrosine 68 is modified (3'-nitrotyrosine). The active-site Electrophile is the histidine 96. A Phosphoserine modification is found at serine 106. A Glycyl lysine isopeptide (Lys-Gly) (interchain with G-Cter in SUMO1) cross-link involves residue lysine 142. Lysine 149 is modified (N6-succinyllysine). N6-acetyllysine; alternate is present on lysine 156. Lysine 156 carries the N6-succinyllysine; alternate modification. The active-site Proton acceptor is glutamate 166. Position 173 is a phosphothreonine (threonine 173). Lysine 194 bears the N6-acetyllysine; alternate mark. Lysine 194 bears the N6-succinyllysine; alternate mark. N6-methyllysine; alternate is present on lysine 194. 3'-nitrotyrosine is present on tyrosine 209. Serine 212 is modified (phosphoserine). At threonine 214 the chain carries Phosphothreonine. At serine 223 the chain carries Phosphoserine. An N6-acetyllysine modification is found at lysine 238.

The protein belongs to the triosephosphate isomerase family. In terms of assembly, homodimer.

Its subcellular location is the cytoplasm. The enzyme catalyses dihydroxyacetone phosphate = methylglyoxal + phosphate. It carries out the reaction D-glyceraldehyde 3-phosphate = dihydroxyacetone phosphate. Its pathway is carbohydrate degradation; glycolysis; D-glyceraldehyde 3-phosphate from glycerone phosphate: step 1/1. It functions in the pathway carbohydrate biosynthesis; gluconeogenesis. In terms of biological role, triosephosphate isomerase is an extremely efficient metabolic enzyme that catalyzes the interconversion between dihydroxyacetone phosphate (DHAP) and D-glyceraldehyde-3-phosphate (G3P) in glycolysis and gluconeogenesis. Its function is as follows. It is also responsible for the non-negligible production of methylglyoxal a reactive cytotoxic side-product that modifies and can alter proteins, DNA and lipids. The sequence is that of Triosephosphate isomerase (TPI1) from Sus scrofa (Pig).